The primary structure comprises 198 residues: Riboflavin synthase (198 aa).

2 Lumazine-binding repeats span residues 1–95 and 96–188; these read MFSG…IGGH and FVSG…VDTV. 2,4-dihydroxypteridine is bound by residues 4–6, 46–48, 60–65, 99–101, K130, 139–141, and 153–158; these read GII, CLT, DVTEET, GHV, SLT, and SVIPET.

Homotrimer.

It catalyses the reaction 2 6,7-dimethyl-8-(1-D-ribityl)lumazine + H(+) = 5-amino-6-(D-ribitylamino)uracil + riboflavin. Its pathway is cofactor biosynthesis; riboflavin biosynthesis; riboflavin from 2-hydroxy-3-oxobutyl phosphate and 5-amino-6-(D-ribitylamino)uracil: step 2/2. In terms of biological role, catalyzes the dismutation of two molecules of 6,7-dimethyl-8-ribityllumazine, resulting in the formation of riboflavin and 5-amino-6-(D-ribitylamino)uracil. This Chlamydia muridarum (strain MoPn / Nigg) protein is Riboflavin synthase (ribE).